A 253-amino-acid polypeptide reads, in one-letter code: DNA repair protein RecO (253 aa).

The protein belongs to the RecO family.

Functionally, involved in DNA repair and RecF pathway recombination. This chain is DNA repair protein RecO, found in Dehalococcoides mccartyi (strain ATCC BAA-2266 / KCTC 15142 / 195) (Dehalococcoides ethenogenes (strain 195)).